Reading from the N-terminus, the 142-residue chain is Large ribosomal subunit protein uL22c (142 aa).

This sequence belongs to the universal ribosomal protein uL22 family. As to quaternary structure, part of the 50S ribosomal subunit.

The protein resides in the plastid. It is found in the chloroplast. Functionally, this protein binds specifically to 23S rRNA. The globular domain of the protein is located near the polypeptide exit tunnel on the outside of the subunit, while an extended beta-hairpin is found that lines the wall of the exit tunnel in the center of the 70S ribosome. This Picea abies (Norway spruce) protein is Large ribosomal subunit protein uL22c (rpl22).